A 113-amino-acid chain; its full sequence is Large ribosomal subunit protein bL17 (113 aa).

Belongs to the bacterial ribosomal protein bL17 family. As to quaternary structure, part of the 50S ribosomal subunit. Contacts protein L32.

The polypeptide is Large ribosomal subunit protein bL17 (Caldicellulosiruptor bescii (strain ATCC BAA-1888 / DSM 6725 / KCTC 15123 / Z-1320) (Anaerocellum thermophilum)).